A 396-amino-acid polypeptide reads, in one-letter code: Lysophospholipid transporter LplT (396 aa).

Residues Met-1–Lys-17 lie on the Periplasmic side of the membrane. A helical transmembrane segment spans residues Ala-18–Leu-38. At Ala-39–Pro-52 the chain is on the cytoplasmic side. The helical transmembrane segment at Ile-53–Ala-73 threads the bilayer. Over Asp-74 to Leu-90 the chain is Periplasmic. Residues Leu-91 to Val-111 traverse the membrane as a helical segment. Topologically, residues Gly-112–Ala-144 are cytoplasmic. The chain crosses the membrane as a helical span at residues Ile-145–Val-165. Position 166 (Ala-166) is a topological domain, periplasmic. A helical transmembrane segment spans residues Leu-167–Leu-187. Topologically, residues Ala-188 to Ser-225 are cytoplasmic. The chain crosses the membrane as a helical span at residues Leu-226–Leu-246. Residues Gly-247–Thr-255 lie on the Periplasmic side of the membrane. A helical transmembrane segment spans residues Tyr-256 to Val-276. The Cytoplasmic portion of the chain corresponds to Thr-277–Glu-279. Residues Thr-280–Leu-300 traverse the membrane as a helical segment. Residues Gln-301–Glu-303 are Periplasmic-facing. The chain crosses the membrane as a helical span at residues Leu-304–Pro-324. At Leu-325 to Ala-342 the chain is on the cytoplasmic side. The chain crosses the membrane as a helical span at residues Ile-343 to Leu-363. Over Ala-364 to Val-365 the chain is Periplasmic. The helical transmembrane segment at Met-366–Ile-386 threads the bilayer. At Thr-387–His-396 the chain is on the cytoplasmic side.

This sequence belongs to the major facilitator superfamily. LplT (TC 2.A.1.42) family.

The protein localises to the cell inner membrane. Catalyzes the facilitated diffusion of 2-acyl-glycero-3-phosphoethanolamine (2-acyl-GPE) into the cell. The sequence is that of Lysophospholipid transporter LplT from Shigella flexneri.